The chain runs to 606 residues: Pyruvate decarboxylase 2 (606 aa).

Substrate contacts are provided by aspartate 68 and histidine 155. The segment at aspartate 433–isoleucine 515 is thiamine pyrophosphate binding. The Mg(2+) site is built by aspartate 483, asparagine 510, and glycine 512. A substrate-binding site is contributed by glutamate 516.

The protein belongs to the TPP enzyme family. As to quaternary structure, homotetramer. A metal cation serves as cofactor. It depends on thiamine diphosphate as a cofactor.

It carries out the reaction a 2-oxocarboxylate + H(+) = an aldehyde + CO2. This Oryza sativa subsp. indica (Rice) protein is Pyruvate decarboxylase 2 (PDC2).